We begin with the raw amino-acid sequence, 270 residues long: 4-hydroxy-tetrahydrodipicolinate reductase (270 aa).

NAD(+)-binding positions include Gly11 to Met16 and Glu37. Residue Arg38 coordinates NADP(+). NAD(+)-binding positions include Gly101 to Thr103 and Ala125 to Met128. The active-site Proton donor/acceptor is the His158. A (S)-2,3,4,5-tetrahydrodipicolinate-binding site is contributed by His159. Lys162 functions as the Proton donor in the catalytic mechanism. (S)-2,3,4,5-tetrahydrodipicolinate is bound at residue Gly168–Thr169.

This sequence belongs to the DapB family.

The protein resides in the cytoplasm. It carries out the reaction (S)-2,3,4,5-tetrahydrodipicolinate + NAD(+) + H2O = (2S,4S)-4-hydroxy-2,3,4,5-tetrahydrodipicolinate + NADH + H(+). The enzyme catalyses (S)-2,3,4,5-tetrahydrodipicolinate + NADP(+) + H2O = (2S,4S)-4-hydroxy-2,3,4,5-tetrahydrodipicolinate + NADPH + H(+). Its pathway is amino-acid biosynthesis; L-lysine biosynthesis via DAP pathway; (S)-tetrahydrodipicolinate from L-aspartate: step 4/4. Catalyzes the conversion of 4-hydroxy-tetrahydrodipicolinate (HTPA) to tetrahydrodipicolinate. This is 4-hydroxy-tetrahydrodipicolinate reductase from Shewanella sp. (strain W3-18-1).